The primary structure comprises 376 residues: Tetraacyldisaccharide 4'-kinase (376 aa).

51–58 (AVGGTGKT) is a binding site for ATP.

This sequence belongs to the LpxK family.

It carries out the reaction a lipid A disaccharide + ATP = a lipid IVA + ADP + H(+). It participates in glycolipid biosynthesis; lipid IV(A) biosynthesis; lipid IV(A) from (3R)-3-hydroxytetradecanoyl-[acyl-carrier-protein] and UDP-N-acetyl-alpha-D-glucosamine: step 6/6. Functionally, transfers the gamma-phosphate of ATP to the 4'-position of a tetraacyldisaccharide 1-phosphate intermediate (termed DS-1-P) to form tetraacyldisaccharide 1,4'-bis-phosphate (lipid IVA). The chain is Tetraacyldisaccharide 4'-kinase from Bacteroides fragilis (strain YCH46).